The sequence spans 392 residues: Succinyl-diaminopimelate desuccinylase (392 aa).

Residue H78 participates in Zn(2+) binding. D80 is an active-site residue. Position 110 (D110) interacts with Zn(2+). The Proton acceptor role is filled by E145. The Zn(2+) site is built by E146, E174, and H363.

Belongs to the peptidase M20A family. DapE subfamily. In terms of assembly, homodimer. Zn(2+) serves as cofactor. The cofactor is Co(2+).

The catalysed reaction is N-succinyl-(2S,6S)-2,6-diaminopimelate + H2O = (2S,6S)-2,6-diaminopimelate + succinate. Its pathway is amino-acid biosynthesis; L-lysine biosynthesis via DAP pathway; LL-2,6-diaminopimelate from (S)-tetrahydrodipicolinate (succinylase route): step 3/3. Functionally, catalyzes the hydrolysis of N-succinyl-L,L-diaminopimelic acid (SDAP), forming succinate and LL-2,6-diaminopimelate (DAP), an intermediate involved in the bacterial biosynthesis of lysine and meso-diaminopimelic acid, an essential component of bacterial cell walls. The sequence is that of Succinyl-diaminopimelate desuccinylase from Methylobacterium radiotolerans (strain ATCC 27329 / DSM 1819 / JCM 2831 / NBRC 15690 / NCIMB 10815 / 0-1).